The following is a 498-amino-acid chain: Aspartyl/glutamyl-tRNA(Asn/Gln) amidotransferase subunit B (498 aa).

This sequence belongs to the GatB/GatE family. GatB subfamily. As to quaternary structure, heterotrimer of A, B and C subunits.

It carries out the reaction L-glutamyl-tRNA(Gln) + L-glutamine + ATP + H2O = L-glutaminyl-tRNA(Gln) + L-glutamate + ADP + phosphate + H(+). The catalysed reaction is L-aspartyl-tRNA(Asn) + L-glutamine + ATP + H2O = L-asparaginyl-tRNA(Asn) + L-glutamate + ADP + phosphate + 2 H(+). Functionally, allows the formation of correctly charged Asn-tRNA(Asn) or Gln-tRNA(Gln) through the transamidation of misacylated Asp-tRNA(Asn) or Glu-tRNA(Gln) in organisms which lack either or both of asparaginyl-tRNA or glutaminyl-tRNA synthetases. The reaction takes place in the presence of glutamine and ATP through an activated phospho-Asp-tRNA(Asn) or phospho-Glu-tRNA(Gln). This is Aspartyl/glutamyl-tRNA(Asn/Gln) amidotransferase subunit B from Caulobacter vibrioides (strain ATCC 19089 / CIP 103742 / CB 15) (Caulobacter crescentus).